Here is a 569-residue protein sequence, read N- to C-terminus: Beta-lactamase-like protein 4 (569 aa).

An N-terminal signal peptide occupies residues 1 to 19; sequence MKYYLYLFLLFTFANLLYS. N-linked (GlcNAc...) asparagine glycans are attached at residues Asn87, Asn172, Asn239, Asn240, Asn250, Asn299, Asn343, Asn412, Asn419, Asn436, Asn468, Asn509, and Asn535.

It belongs to the beta-lactamase family.

The protein resides in the secreted. The sequence is that of Beta-lactamase-like protein 4 from Dictyostelium discoideum (Social amoeba).